We begin with the raw amino-acid sequence, 476 residues long: Calcium uptake protein 1, mitochondrial (476 aa).

The N-terminal 33 residues, 1-33 (MFRLNSLSALAELAVGSRWYHGGSQPIQIRRRL), are a transit peptide targeting the mitochondrion. The disordered stretch occupies residues 68–106 (SDIGDKGKNKDEGDVCNHEKKTADLAPHPEEKKKKRSGF). Residues 99-110 (KKKKRSGFRDRK) are polybasic region. Ser-122 is subject to Phosphoserine. The tract at residues 126–129 (KIFR) is k/R-ring. The region spanning 218–253 (TPQRNFEIAFKMFDLNGDGEVDMEEFEQVQSIIRSQ) is the EF-hand 1 domain. Asp-231, Asn-233, Asp-235, Glu-237, and Glu-242 together coordinate Ca(2+). Positions 259–263 (RHRDR) are k/R-ring. In terms of domain architecture, EF-hand 2 spans 408-443 (LSDHVCDVVFALFDCDGNGELSNKEFVSIMKQRLMR). Positions 421, 423, 425, 427, and 432 each coordinate Ca(2+). Arg-455 carries the post-translational modification Asymmetric dimethylarginine. Residues 455–465 (RLMQAMWKCAQ) form a C-helix region region.

It belongs to the MICU1 family. MICU1 subfamily. Heterodimer; disulfide-linked; heterodimerizes with MICU2 or MICU3. Homodimer; disulfide-linked. Component of the uniplex complex, composed of MCU, EMRE/SMDT1, MICU1 and MICU2 (or MICU3) in a 4:4:1:1 stoichiometry. The composition of calcium sensors within the uniplex complex can differ depending on tissues: a MICU1 homodimer can be present instead of the MICU1-MICU2 heterodimer in skeletal-muscle and kidney. MICU1 is recruited to the uniplex complex by EMRE/SMDT1, and it associates with MCU at low calcium levels, occluding the pore of the MCU channel. Associates with the MICOS complex. Interacts with SLC25A23. Interacts with CHCHD4/MIA40; which introduces the interchain disulfide bond with MICU2. Interacts (when methylated) with UCP2; leading to decrease the calcium sensitivity of MICU1. In terms of processing, phosphorylation at Ser-122 by AKT1 impairs its maturation and stability. Post-translationally, asymmetric dimethylation at Arg-455 by PRMT1 decreases the calcium sensitivity of MICU1 by promoting interaction with UCP2. Degraded by YME1L1 when not complexed as homodimer or heterodimer. Not degraded when complexed as homodimer or heterodimer; the presence of the interchain disulfide bond protecting MICU1 from degradation by YME1L1. As to expression, expressed in epithelial cell lines. Strongly expressed in epidermal keratinocytes and dermal endothelial cells.

Its subcellular location is the mitochondrion intermembrane space. The protein resides in the mitochondrion inner membrane. Activated by spermine, kaempferol and SB202190, which bind MICU1 and prevent MCU pore occlusion in absence of calcium. Calcium sensor of the mitochondrial calcium uniporter (MCU) channel, which senses calcium level via its EF-hand domains. MICU1 and MICU2 (or MICU3) form a disulfide-linked heterodimer that stimulates and inhibits MCU activity, depending on the concentration of calcium. At low calcium levels, MICU1 occludes the pore of the MCU channel, preventing mitochondrial calcium uptake. At higher calcium levels, calcium-binding to MICU1 and MICU2 (or MICU3) induces a conformational change that weakens MCU-MICU1 interactions and moves the MICU1-MICU2 heterodimer away from the pore, allowing calcium permeation through the MCU channel. Also required to protect against manganese toxicity by preventing manganese uptake by MCU: mechanistically, manganese-binding to its EF-hand domains does not induce any conformational change, maintaining MCU pore occlusion. Also acts as a barrier for inhibitors of the MCU channel, such as ruthenium red or its derivative Ru360. Acts as a regulator of mitochondrial cristae structure independently of its ability to regulate the mitochondrial calcium uniporter channel. Regulates glucose-dependent insulin secretion in pancreatic beta-cells by regulating mitochondrial calcium uptake. Induces T-helper 1-mediated autoreactivity, which is accompanied by the release of IFNG. Functionally, isoform that regulates mitochondrial calcium uniporter (MCU) in the skeletal muscle. Compared to other isoforms, this isoform has higher affinity for calcium, promoting mitochondrial calcium uptake at lower calcium concentrations. This allows a rapid response of mitochondrial metabolism and ensures sustained ATP production needed for resistance and strenuous exercise. The polypeptide is Calcium uptake protein 1, mitochondrial (Homo sapiens (Human)).